The chain runs to 74 residues: Turripeptide OL135 (74 aa).

A signal peptide spans 1–20 (MKVPIVLMLVLLLIMPLSDG). The propeptide occupies 21–28 (YERKRXXX).

Belongs to the conopeptide P-like superfamily. Contains 3 disulfide bonds. In terms of tissue distribution, expressed by the venom duct.

Its subcellular location is the secreted. Its function is as follows. Acts as a neurotoxin by inhibiting an ion channel. The chain is Turripeptide OL135 from Iotyrris olangoensis (Sea snail).